Reading from the N-terminus, the 558-residue chain is Polypeptide N-acetylgalactosaminyltransferase 16 (558 aa).

Topologically, residues 1 to 6 are cytoplasmic; it reads MRKIRA. A helical; Signal-anchor for type II membrane protein transmembrane segment spans residues 7-26; sequence NAIAILTVAWILGTFYYLWQ. Over 27 to 558 the chain is Lumenal; that stretch reads DNRAHAASSG…AQQWQLLPHT (532 aa). Positions 33 to 54 are disordered; it reads ASSGGRGAQRAGRRSEQLREDR. Residues 45-54 are compositionally biased toward basic and acidic residues; sequence RRSEQLREDR. Disulfide bonds link Cys-113/Cys-340, Cys-331/Cys-409, Cys-441/Cys-460, Cys-486/Cys-506, and Cys-530/Cys-543. Residues 122-227 are catalytic subdomain A; that stretch reads LPATSVIITF…TEWLPPMLQR (106 aa). Asp-163 and Arg-188 together coordinate substrate. Asp-211 lines the Mn(2+) pocket. Ser-212 contacts substrate. His-213 serves as a coordination point for Mn(2+). The segment at 286 to 348 is catalytic subdomain B; the sequence is PIRTPVIAGG…PCSRVGHVFR (63 aa). Trp-317 lines the substrate pocket. His-345 contacts Mn(2+). Substrate-binding residues include Arg-348, His-351, and Tyr-353. The 128-residue stretch at 428–555 folds into the Ricin B-type lectin domain; the sequence is KEALPGIIKQ…DAQAQQWQLL (128 aa).

It belongs to the glycosyltransferase 2 family. GalNAc-T subfamily. The cofactor is Mn(2+).

It localises to the golgi apparatus membrane. The enzyme catalyses L-seryl-[protein] + UDP-N-acetyl-alpha-D-galactosamine = a 3-O-[N-acetyl-alpha-D-galactosaminyl]-L-seryl-[protein] + UDP + H(+). It carries out the reaction L-threonyl-[protein] + UDP-N-acetyl-alpha-D-galactosamine = a 3-O-[N-acetyl-alpha-D-galactosaminyl]-L-threonyl-[protein] + UDP + H(+). It participates in protein modification; protein glycosylation. Functionally, catalyzes the initial reaction in O-linked oligosaccharide biosynthesis, the transfer of an N-acetyl-D-galactosamine residue to a serine or threonine residue on the protein receptor. This is Polypeptide N-acetylgalactosaminyltransferase 16 (GALNT16) from Homo sapiens (Human).